Reading from the N-terminus, the 519-residue chain is Signal transduction histidine-protein kinase/phosphatase MprB (519 aa).

Residues 1-26 (MVRFAWRRRASLRATSSLSLRWRVML) lie on the Cytoplasmic side of the membrane. Residues 27-47 (LAMSMVAMVVVLMAFAVYVVI) form a helical membrane-spanning segment. Topologically, residues 48-163 (SAALYSDIDN…PTEAVMTKLR (116 aa)) are extracellular. Residues 164–184 (WVLLIVGSLGVAVAAVAGGMV) traverse the membrane as a helical segment. Residues 185–519 (TRAGLRPVGR…SVDYQSARAR (335 aa)) are Cytoplasmic-facing. The HAMP domain maps to 186-238 (RAGLRPVGRLTEAAERVARTDDLRPIPVFGSDELARLTEAFNLMLRALAESRE). Positions 246-466 (DAGHELRTPL…SIYVLLPGRP (221 aa)) constitute a Histidine kinase domain. Histidine 249 carries the post-translational modification Phosphohistidine; by autocatalysis.

Mg(2+) serves as cofactor. Requires Mn(2+) as cofactor. Post-translationally, autophosphorylated.

The protein resides in the cell membrane. It carries out the reaction ATP + protein L-histidine = ADP + protein N-phospho-L-histidine.. Its function is as follows. Member of the two-component regulatory system MprB/MprA which contributes to maintaining a balance among several systems involved in stress resistance and is required for establishment and maintenance of persistent infection in the host. In response to environmental signals MprB acts both as a membrane-associated protein kinase that undergoes autophosphorylation and subsequently transfers the phosphate to MprA, and a protein phosphatase that dephosphorylates phospho-MprA. The protein is Signal transduction histidine-protein kinase/phosphatase MprB (mprB) of Mycobacterium leprae (strain TN).